Here is a 671-residue protein sequence, read N- to C-terminus: Zinc finger and BTB domain-containing protein 16-A (671 aa).

The BTB domain occupies 34 to 96; sequence CDVVIMVDSQ…AYTATLQAKV (63 aa). 2 disordered regions span residues 130–167 and 248–289; these read ENDT…TEES and VDES…RSSV. A compositionally biased stretch (basic and acidic residues) spans 270 to 279; sequence RSGEPDKNRD. T283 carries the phosphothreonine modification. 9 C2H2-type zinc fingers span residues 401–423, 429–451, 458–480, 487–509, 515–537, 544–566, 572–594, 600–622, and 628–650; these read ERCN…RKLH, YGCE…LLSH, IVCD…RQIH, IFCL…MEVH, YICS…LRSH, FECE…KRIH, YECN…YRVH, FECK…LRTH, and YQCT…MKGH.

The protein belongs to the krueppel C2H2-type zinc-finger protein family. In terms of assembly, interacts with btbd6a (via BTB domain). Polyubiquitinated, leading to its proteasomal degradation. In terms of tissue distribution, during early stages of primary neurogenesis, expressed in the neural epithelium, with highest levels in the forebrain and midbrain. Also expressed in a posterior-to-anterior gradient in the caudal neural plate at the 3-6 somite stage.

It is found in the nucleus. It localises to the cytoplasm. Its pathway is protein modification; protein ubiquitination. Its function is as follows. Probable transcription factor. Probable substrate-recognition component of an E3 ubiquitin-protein ligase complex which mediates the ubiquitination and subsequent proteasomal degradation of target proteins. Inhibits neurogenesis. The protein is Zinc finger and BTB domain-containing protein 16-A of Danio rerio (Zebrafish).